The primary structure comprises 251 residues: 3-deoxy-manno-octulosonate cytidylyltransferase (251 aa).

It belongs to the KdsB family.

Its subcellular location is the cytoplasm. The catalysed reaction is 3-deoxy-alpha-D-manno-oct-2-ulosonate + CTP = CMP-3-deoxy-beta-D-manno-octulosonate + diphosphate. Its pathway is nucleotide-sugar biosynthesis; CMP-3-deoxy-D-manno-octulosonate biosynthesis; CMP-3-deoxy-D-manno-octulosonate from 3-deoxy-D-manno-octulosonate and CTP: step 1/1. It participates in bacterial outer membrane biogenesis; lipopolysaccharide biosynthesis. Functionally, activates KDO (a required 8-carbon sugar) for incorporation into bacterial lipopolysaccharide in Gram-negative bacteria. The protein is 3-deoxy-manno-octulosonate cytidylyltransferase of Rhizobium leguminosarum bv. trifolii (strain WSM2304).